We begin with the raw amino-acid sequence, 513 residues long: Tryptophan--tRNA ligase 1 (513 aa).

The 'HIGH' region motif lies at 86 to 94 (PTGDPHIGH). The 'KMSKS' region signature appears at 393-397 (KMSSS).

Belongs to the class-I aminoacyl-tRNA synthetase family.

It is found in the cytoplasm. The enzyme catalyses tRNA(Trp) + L-tryptophan + ATP = L-tryptophyl-tRNA(Trp) + AMP + diphosphate + H(+). The sequence is that of Tryptophan--tRNA ligase 1 from Halobacterium salinarum (strain ATCC 700922 / JCM 11081 / NRC-1) (Halobacterium halobium).